A 690-amino-acid polypeptide reads, in one-letter code: Potassium-transporting ATPase ATP-binding subunit (690 aa).

A disordered region spans residues 1 to 23; that stretch reads MNSTSTVRQPGGPRQQRRHTPKA. 4 helical membrane passes run 44–64, 78–98, 233–253, and 268–288; these read IMVK…TGML, AMFN…ANFA, IALT…VATL, and LLIA…LSAI. Residue D321 is the 4-aspartylphosphate intermediate of the active site. ATP is bound by residues D358, E362, 389 to 396, and K408; that span reads FSARTRMS. Residues D531 and D535 each coordinate Mg(2+). Helical transmembrane passes span 601 to 621, 627 to 647, and 665 to 685; these read FAII…IMDL, AVLS…PLAL, and ILVY…LIDL.

Belongs to the cation transport ATPase (P-type) (TC 3.A.3) family. Type IA subfamily. In terms of assembly, the system is composed of three essential subunits: KdpA, KdpB and KdpC.

The protein resides in the cell inner membrane. It carries out the reaction K(+)(out) + ATP + H2O = K(+)(in) + ADP + phosphate + H(+). Its function is as follows. Part of the high-affinity ATP-driven potassium transport (or Kdp) system, which catalyzes the hydrolysis of ATP coupled with the electrogenic transport of potassium into the cytoplasm. This subunit is responsible for energy coupling to the transport system and for the release of the potassium ions to the cytoplasm. This is Potassium-transporting ATPase ATP-binding subunit from Synechocystis sp. (strain ATCC 27184 / PCC 6803 / Kazusa).